Consider the following 580-residue polypeptide: Guanine nucleotide-binding protein alpha-4 subunit (580 aa).

Positions 1-10 (MSPSVSSPQL) are enriched in polar residues. The tract at residues 1 to 28 (MSPSVSSPQLRHTKSNRAISRIDRTDPL) is disordered. One can recognise a G-alpha domain in the interval 93-579 (RVYKMVLLGQ…RENLKLTGLV (487 aa)). The tract at residues 96-109 (KMVLLGQAGAGKTT) is G1 motif. 101–108 (GQAGAGKT) lines the GTP pocket. 2 disordered regions span residues 160 to 196 (KSSELSRLESSTSASTSTSASASSPKHVDTESQPNDA) and 302 to 325 (GRAAAARRETDGGDSQSESEKDNS). A compositionally biased stretch (low complexity) spans 167 to 183 (LESSTSASTSTSASASS). The interval 387–395 (DILHSRVRT) is G2 motif. Residues 389-395 (LHSRVRT), 415-419 (DVGGS), 484-487 (NKID), and A551 each bind GTP. T395 contacts Mg(2+). The interval 411–420 (YRIYDVGGSR) is G3 motif. Residues 480-487 (ILFLNKID) are G4 motif. The interval 549–554 (TVATST) is G5 motif.

This sequence belongs to the G-alpha family. G proteins are composed of 3 units; alpha, beta and gamma. The alpha chain contains the guanine nucleotide binding site.

Guanine nucleotide-binding proteins (G proteins) are involved as modulators or transducers in various transmembrane signaling systems. This is Guanine nucleotide-binding protein alpha-4 subunit (GPA4) from Mycosarcoma maydis (Corn smut fungus).